Here is a 124-residue protein sequence, read N- to C-terminus: Ragulator complex protein LAMTOR2 homolog (124 aa).

The protein belongs to the GAMAD family. In terms of assembly, part of the Ragulator complex.

In terms of biological role, regulator of the TOR pathway, a signaling cascade that promotes cell growth in response to growth factors, energy levels, and amino acids. May activate the TOR signaling cascade in response to amino acids. The chain is Ragulator complex protein LAMTOR2 homolog from Caenorhabditis elegans.